The primary structure comprises 380 residues: Cytochrome b (380 aa).

4 consecutive transmembrane segments (helical) span residues 33-53, 77-98, 113-133, and 178-198; these read FGSLLGICLITQIVTGLFLAM, WLIRSTHANGASLFFICIYLHV, WNIGVILLMLVMITAFVGYVL, and FFAFHFLLPFVISGASIIHLL. Heme b contacts are provided by H83 and H97. Heme b-binding residues include H182 and H196. H201 provides a ligand contact to a ubiquinone. Transmembrane regions (helical) follow at residues 226–246, 288–308, 320–340, and 347–367; these read YKDMLGFLITLTTLAFLTLFT, LGGVLALVSSILVLLLVPILH, ITQMLFWALVADMLILTWIGG, and FMTIGQIASITYFSLFLILIP.

This sequence belongs to the cytochrome b family. The cytochrome bc1 complex contains 3 respiratory subunits (MT-CYB, CYC1 and UQCRFS1), 2 core proteins (UQCRC1 and UQCRC2) and probably 6 low-molecular weight proteins. Requires heme b as cofactor.

The protein localises to the mitochondrion inner membrane. Its function is as follows. Component of the ubiquinol-cytochrome c reductase complex (complex III or cytochrome b-c1 complex) that is part of the mitochondrial respiratory chain. The b-c1 complex mediates electron transfer from ubiquinol to cytochrome c. Contributes to the generation of a proton gradient across the mitochondrial membrane that is then used for ATP synthesis. This is Cytochrome b (mt-cyb) from Latimeria chalumnae (Coelacanth).